A 295-amino-acid chain; its full sequence is Acetyl-coenzyme A carboxylase carboxyl transferase subunit beta (295 aa).

The tract at residues 1–20 (MSWLSKLMPSGIRTENTPAK) is disordered. The 268-residue stretch at 28–295 (LWEKCSNCGS…QPHPQDADAA (268 aa)) folds into the CoA carboxyltransferase N-terminal domain. Zn(2+)-binding residues include Cys32, Cys35, Cys51, and Cys54. Residues 32–54 (CSNCGSALYGPELEENLEVCPKC) form a C4-type zinc finger.

Belongs to the AccD/PCCB family. In terms of assembly, acetyl-CoA carboxylase is a heterohexamer composed of biotin carboxyl carrier protein (AccB), biotin carboxylase (AccC) and two subunits each of ACCase subunit alpha (AccA) and ACCase subunit beta (AccD). Zn(2+) serves as cofactor.

The protein localises to the cytoplasm. It catalyses the reaction N(6)-carboxybiotinyl-L-lysyl-[protein] + acetyl-CoA = N(6)-biotinyl-L-lysyl-[protein] + malonyl-CoA. Its pathway is lipid metabolism; malonyl-CoA biosynthesis; malonyl-CoA from acetyl-CoA: step 1/1. Component of the acetyl coenzyme A carboxylase (ACC) complex. Biotin carboxylase (BC) catalyzes the carboxylation of biotin on its carrier protein (BCCP) and then the CO(2) group is transferred by the transcarboxylase to acetyl-CoA to form malonyl-CoA. The protein is Acetyl-coenzyme A carboxylase carboxyl transferase subunit beta of Xanthomonas campestris pv. campestris (strain B100).